The following is a 413-amino-acid chain: Glutamyl-tRNA reductase (413 aa).

Substrate-binding positions include 57 to 60, S113, 118 to 120, and Q124; these read TCNR and DFE. C58 acts as the Nucleophile in catalysis. NADP(+) is bound at residue 193–198; sequence GTGKIG.

The protein belongs to the glutamyl-tRNA reductase family. As to quaternary structure, homodimer.

The enzyme catalyses (S)-4-amino-5-oxopentanoate + tRNA(Glu) + NADP(+) = L-glutamyl-tRNA(Glu) + NADPH + H(+). Its pathway is porphyrin-containing compound metabolism; protoporphyrin-IX biosynthesis; 5-aminolevulinate from L-glutamyl-tRNA(Glu): step 1/2. Catalyzes the NADPH-dependent reduction of glutamyl-tRNA(Glu) to glutamate 1-semialdehyde (GSA). This is Glutamyl-tRNA reductase from Flavobacterium psychrophilum (strain ATCC 49511 / DSM 21280 / CIP 103535 / JIP02/86).